Here is a 456-residue protein sequence, read N- to C-terminus: Argininosuccinate lyase (456 aa).

Belongs to the lyase 1 family. Argininosuccinate lyase subfamily.

The protein resides in the cytoplasm. It catalyses the reaction 2-(N(omega)-L-arginino)succinate = fumarate + L-arginine. The protein operates within amino-acid biosynthesis; L-arginine biosynthesis; L-arginine from L-ornithine and carbamoyl phosphate: step 3/3. This is Argininosuccinate lyase from Listeria monocytogenes serotype 4a (strain HCC23).